The following is a 369-amino-acid chain: Fructose-bisphosphate aldolase (369 aa).

Dihydroxyacetone phosphate is bound at residue aspartate 40. The D-glyceraldehyde 3-phosphate site is built by serine 42 and threonine 45. Arginine 49 contacts beta-D-fructose 1,6-bisphosphate. Lysine 113 contacts D-glyceraldehyde 3-phosphate. Lysine 152 provides a ligand contact to dihydroxyacetone phosphate. Glutamate 195 contacts D-glyceraldehyde 3-phosphate. The active-site Proton acceptor is glutamate 195. 3 residues coordinate dihydroxyacetone phosphate: lysine 237, serine 279, and glycine 280. Lysine 237 functions as the Schiff-base intermediate with dihydroxyacetone phosphate in the catalytic mechanism. Beta-D-fructose 1,6-bisphosphate-binding positions include 279 to 281 (SGG) and serine 307. Dihydroxyacetone phosphate is bound by residues glycine 309 and arginine 310. Residue arginine 310 coordinates beta-D-fructose 1,6-bisphosphate.

Belongs to the class I fructose-bisphosphate aldolase family. Homotetramer. Interacts with TRAP (via cytoplasmic domain); the interaction prevents substrate binding and thereby inhibits aldolase activity. Interacts with MTRAP (via cytoplasmic domain); MTRAP phosphorylation may increase the binding to FBPA. Interact with RH1 (via cytoplasmic domain). Interacts with RH2b (via cytoplasmic domain). Interacts with RH4 (via cytoplasmic domain). Interacts with AMA1 (via cytoplasmic domain); the interaction is weak, however it may be increased upon AMA1 phosphorylation. Interacts with EBA140 (via cytoplasmic domain); the interaction is weak. Interacts with EBA175 (via cytoplasmic domain); the interaction is weak. Interacts with EBA181 (via cytoplasmic domain); the interaction is weak. Interacts with G-actin and F-actin. May interact with ACT2/actin II; the interaction inhibits FBPA catalytic activity. Interacts with human SLC4A1/band 3 (via N-terminus); the interaction inhibits FBPA catalytic activity.

Its subcellular location is the cytoplasm. It is found in the membrane. It localises to the host cell membrane. It catalyses the reaction beta-D-fructose 1,6-bisphosphate = D-glyceraldehyde 3-phosphate + dihydroxyacetone phosphate. Its pathway is carbohydrate degradation; glycolysis; D-glyceraldehyde 3-phosphate and glycerone phosphate from D-glucose: step 4/4. With respect to regulation, the cytoplasmic tail of TRAP and probably other adhesins acts as a competitive inhibitor as the binding sites of the glycolytic substrate fructose 1,6-bisphosphate and TRAP partially overlap. Plays a key role in glycolysis by catalyzing the cleavage of fructose 1,6-bisphosphate into dihydroxyacetone phosphate and glyceraldehyde 3-phosphate. Independently of its catalytic activity, connects the actin filaments, and thus the actomyosin motor, to cell surface adhesins of the thrombospondin-related anonymous protein (TRAP), the erythrocyte binding ligand (EBL) and reticulocyte binding homolog (RH) protein families; this interaction is probably involved in transducing the motor force across the parasite surface required for sporozoite and ookinete gliding motility and merozoite invasion. Stimulates actin polymerisation. The polypeptide is Fructose-bisphosphate aldolase (Plasmodium falciparum (isolate 3D7)).